A 196-amino-acid polypeptide reads, in one-letter code: ATP-dependent Clp protease proteolytic subunit (196 aa).

S101 (nucleophile) is an active-site residue. The active site involves H126.

It belongs to the peptidase S14 family. In terms of assembly, component of the chloroplastic Clp protease core complex.

Its subcellular location is the plastid. It localises to the chloroplast stroma. It carries out the reaction Hydrolysis of proteins to small peptides in the presence of ATP and magnesium. alpha-casein is the usual test substrate. In the absence of ATP, only oligopeptides shorter than five residues are hydrolyzed (such as succinyl-Leu-Tyr-|-NHMec, and Leu-Tyr-Leu-|-Tyr-Trp, in which cleavage of the -Tyr-|-Leu- and -Tyr-|-Trp bonds also occurs).. Functionally, cleaves peptides in various proteins in a process that requires ATP hydrolysis. Has a chymotrypsin-like activity. Plays a major role in the degradation of misfolded proteins. This chain is ATP-dependent Clp protease proteolytic subunit, found in Spinacia oleracea (Spinach).